We begin with the raw amino-acid sequence, 312 residues long: DNA-directed RNA polymerase subunit alpha (312 aa).

The interval 1–229 is alpha N-terminal domain (alpha-NTD); it reads MLQYQIDRID…ELFQPLATVT (229 aa). The tract at residues 246–312 is alpha C-terminal domain (alpha-CTD); the sequence is IPLEELNLSV…ISIPQSRTSV (67 aa).

The protein belongs to the RNA polymerase alpha chain family. In cyanobacteria the RNAP catalytic core is composed of 2 alpha, 1 beta, 1 beta', 1 gamma and 1 omega subunit. When a sigma factor is associated with the core the holoenzyme is formed, which can initiate transcription.

It catalyses the reaction RNA(n) + a ribonucleoside 5'-triphosphate = RNA(n+1) + diphosphate. Its function is as follows. DNA-dependent RNA polymerase catalyzes the transcription of DNA into RNA using the four ribonucleoside triphosphates as substrates. This is DNA-directed RNA polymerase subunit alpha from Prochlorococcus marinus subsp. pastoris (strain CCMP1986 / NIES-2087 / MED4).